The following is a 201-amino-acid chain: Methylated-DNA--protein-cysteine methyltransferase (201 aa).

Tyr131, Gly132, and Arg146 together coordinate DNA. Catalysis depends on Cys163, which acts as the Nucleophile; methyl group acceptor.

The protein belongs to the MGMT family.

It localises to the nucleus. The enzyme catalyses a 6-O-methyl-2'-deoxyguanosine in DNA + L-cysteinyl-[protein] = S-methyl-L-cysteinyl-[protein] + a 2'-deoxyguanosine in DNA. It catalyses the reaction a 4-O-methyl-thymidine in DNA + L-cysteinyl-[protein] = a thymidine in DNA + S-methyl-L-cysteinyl-[protein]. In terms of biological role, involved in the cellular defense against the biological effects of O6-methylguanine (O6-MeG) and O4-methylthymine (O4-MeT) in DNA. Repairs the methylated nucleobase in DNA by stoichiometrically transferring the methyl group to a cysteine residue in the enzyme. This is a suicide reaction: the enzyme is irreversibly inactivated. In Lodderomyces elongisporus (strain ATCC 11503 / CBS 2605 / JCM 1781 / NBRC 1676 / NRRL YB-4239) (Yeast), this protein is Methylated-DNA--protein-cysteine methyltransferase (MGT1).